A 647-amino-acid chain; its full sequence is 1-deoxy-D-xylulose-5-phosphate synthase (647 aa).

Thiamine diphosphate is bound by residues histidine 88 and 129–131 (GHA). Aspartate 160 lines the Mg(2+) pocket. Thiamine diphosphate is bound by residues 161 to 162 (GA), asparagine 189, tyrosine 300, and glutamate 377. Asparagine 189 contributes to the Mg(2+) binding site.

It belongs to the transketolase family. DXPS subfamily. Homodimer. Requires Mg(2+) as cofactor. The cofactor is thiamine diphosphate.

The enzyme catalyses D-glyceraldehyde 3-phosphate + pyruvate + H(+) = 1-deoxy-D-xylulose 5-phosphate + CO2. The protein operates within metabolic intermediate biosynthesis; 1-deoxy-D-xylulose 5-phosphate biosynthesis; 1-deoxy-D-xylulose 5-phosphate from D-glyceraldehyde 3-phosphate and pyruvate: step 1/1. In terms of biological role, catalyzes the acyloin condensation reaction between C atoms 2 and 3 of pyruvate and glyceraldehyde 3-phosphate to yield 1-deoxy-D-xylulose-5-phosphate (DXP). This is 1-deoxy-D-xylulose-5-phosphate synthase from Dehalococcoides mccartyi (strain ATCC BAA-2266 / KCTC 15142 / 195) (Dehalococcoides ethenogenes (strain 195)).